We begin with the raw amino-acid sequence, 364 residues long: Aminomethyltransferase (364 aa).

This sequence belongs to the GcvT family. As to quaternary structure, the glycine cleavage system is composed of four proteins: P, T, L and H.

The catalysed reaction is N(6)-[(R)-S(8)-aminomethyldihydrolipoyl]-L-lysyl-[protein] + (6S)-5,6,7,8-tetrahydrofolate = N(6)-[(R)-dihydrolipoyl]-L-lysyl-[protein] + (6R)-5,10-methylene-5,6,7,8-tetrahydrofolate + NH4(+). Its function is as follows. The glycine cleavage system catalyzes the degradation of glycine. The sequence is that of Aminomethyltransferase from Shewanella baltica (strain OS223).